A 149-amino-acid polypeptide reads, in one-letter code: D-aminoacyl-tRNA deacylase (149 aa).

The Gly-cisPro motif, important for rejection of L-amino acids signature appears at Gly-141–Pro-142.

The protein belongs to the DTD family. Homodimer.

The protein localises to the cytoplasm. It carries out the reaction glycyl-tRNA(Ala) + H2O = tRNA(Ala) + glycine + H(+). The catalysed reaction is a D-aminoacyl-tRNA + H2O = a tRNA + a D-alpha-amino acid + H(+). Functionally, an aminoacyl-tRNA editing enzyme that deacylates mischarged D-aminoacyl-tRNAs. Also deacylates mischarged glycyl-tRNA(Ala), protecting cells against glycine mischarging by AlaRS. Acts via tRNA-based rather than protein-based catalysis; rejects L-amino acids rather than detecting D-amino acids in the active site. By recycling D-aminoacyl-tRNA to D-amino acids and free tRNA molecules, this enzyme counteracts the toxicity associated with the formation of D-aminoacyl-tRNA entities in vivo and helps enforce protein L-homochirality. The protein is D-aminoacyl-tRNA deacylase of Hydrogenovibrio crunogenus (strain DSM 25203 / XCL-2) (Thiomicrospira crunogena).